We begin with the raw amino-acid sequence, 585 residues long: Serine/threonine-protein kinase PknI (585 aa).

The Cytoplasmic segment spans residues Met-1 to Arg-349. In terms of domain architecture, Protein kinase spans Tyr-12 to Asn-252. ATP contacts are provided by residues Leu-18 to Val-26 and Lys-41. ADP contacts are provided by Lys-41, Asp-90, and Val-92. Asp-137 acts as the Proton acceptor in catalysis. A helical transmembrane segment spans residues Ile-350–Ile-370. Residues Gly-371–Arg-585 are Extracellular-facing. Residues Ser-546–Arg-585 form a disordered region. The segment covering Thr-554–Arg-585 has biased composition (low complexity).

This sequence belongs to the protein kinase superfamily. Ser/Thr protein kinase family. Mn(2+) is required as a cofactor. In terms of processing, autophosphorylated at serine and threonine residues.

It is found in the cytoplasm. The protein localises to the cell membrane. The enzyme catalyses L-seryl-[protein] + ATP = O-phospho-L-seryl-[protein] + ADP + H(+). It catalyses the reaction L-threonyl-[protein] + ATP = O-phospho-L-threonyl-[protein] + ADP + H(+). Plays an important role in slowing down the growth of mycobacteria within the infected host. In Mycobacterium bovis (strain ATCC BAA-935 / AF2122/97), this protein is Serine/threonine-protein kinase PknI (pknI).